The following is a 314-amino-acid chain: UDP-N-acetylenolpyruvoylglucosamine reductase (314 aa).

One can recognise an FAD-binding PCMH-type domain in the interval 27–192; that stretch reads KIGGKARYIV…LRAVFCLKFA (166 aa). Residue Arg-171 is part of the active site. Ser-223 (proton donor) is an active-site residue. Residue Glu-293 is part of the active site.

It belongs to the MurB family. Requires FAD as cofactor.

It localises to the cytoplasm. It catalyses the reaction UDP-N-acetyl-alpha-D-muramate + NADP(+) = UDP-N-acetyl-3-O-(1-carboxyvinyl)-alpha-D-glucosamine + NADPH + H(+). The protein operates within cell wall biogenesis; peptidoglycan biosynthesis. Functionally, cell wall formation. This Caldicellulosiruptor bescii (strain ATCC BAA-1888 / DSM 6725 / KCTC 15123 / Z-1320) (Anaerocellum thermophilum) protein is UDP-N-acetylenolpyruvoylglucosamine reductase.